Consider the following 253-residue polypeptide: Type III pantothenate kinase (253 aa).

Residue 6-13 (DVGNTNTV) participates in ATP binding. 103–106 (GADR) serves as a coordination point for substrate. Aspartate 105 (proton acceptor) is an active-site residue. Aspartate 125 provides a ligand contact to K(+). Threonine 128 contributes to the ATP binding site. Threonine 180 contributes to the substrate binding site.

This sequence belongs to the type III pantothenate kinase family. As to quaternary structure, homodimer. It depends on NH4(+) as a cofactor. Requires K(+) as cofactor.

It is found in the cytoplasm. The enzyme catalyses (R)-pantothenate + ATP = (R)-4'-phosphopantothenate + ADP + H(+). Its pathway is cofactor biosynthesis; coenzyme A biosynthesis; CoA from (R)-pantothenate: step 1/5. Functionally, catalyzes the phosphorylation of pantothenate (Pan), the first step in CoA biosynthesis. This chain is Type III pantothenate kinase, found in Parafrankia sp. (strain EAN1pec).